The primary structure comprises 159 residues: Ribosomal RNA large subunit methyltransferase H (159 aa).

Residues Leu76, Gly108, and 127–132 (FGKLTL) each bind S-adenosyl-L-methionine.

The protein belongs to the RNA methyltransferase RlmH family. In terms of assembly, homodimer.

The protein resides in the cytoplasm. It carries out the reaction pseudouridine(1915) in 23S rRNA + S-adenosyl-L-methionine = N(3)-methylpseudouridine(1915) in 23S rRNA + S-adenosyl-L-homocysteine + H(+). Functionally, specifically methylates the pseudouridine at position 1915 (m3Psi1915) in 23S rRNA. This chain is Ribosomal RNA large subunit methyltransferase H, found in Latilactobacillus sakei subsp. sakei (strain 23K) (Lactobacillus sakei subsp. sakei).